The primary structure comprises 153 residues: Nucleoside diphosphate kinase (153 aa).

6 residues coordinate ATP: Lys-13, Phe-61, Arg-89, Thr-95, Arg-106, and Asn-116. His-119 serves as the catalytic Pros-phosphohistidine intermediate.

This sequence belongs to the NDK family. It depends on Mg(2+) as a cofactor. In terms of tissue distribution, highest levels in the liver and kidney with lower levels in the heart, brain and breast muscle.

The protein localises to the cytoplasm. It is found in the cell membrane. The enzyme catalyses a 2'-deoxyribonucleoside 5'-diphosphate + ATP = a 2'-deoxyribonucleoside 5'-triphosphate + ADP. It catalyses the reaction a ribonucleoside 5'-diphosphate + ATP = a ribonucleoside 5'-triphosphate + ADP. Its function is as follows. Major role in the synthesis of nucleoside triphosphates other than ATP. The ATP gamma phosphate is transferred to the NDP beta phosphate via a ping-pong mechanism, using a phosphorylated active-site intermediate. The chain is Nucleoside diphosphate kinase from Columba livia (Rock dove).